Reading from the N-terminus, the 185-residue chain is Elongation factor P (185 aa).

It belongs to the elongation factor P family.

The protein resides in the cytoplasm. Its pathway is protein biosynthesis; polypeptide chain elongation. Involved in peptide bond synthesis. Stimulates efficient translation and peptide-bond synthesis on native or reconstituted 70S ribosomes in vitro. Probably functions indirectly by altering the affinity of the ribosome for aminoacyl-tRNA, thus increasing their reactivity as acceptors for peptidyl transferase. This chain is Elongation factor P, found in Microcystis aeruginosa (strain NIES-843 / IAM M-2473).